Reading from the N-terminus, the 1317-residue chain is uncharacterized protein (1317 aa).

Belongs to the oxoprolinase family.

This is an uncharacterized protein from Schizosaccharomyces pombe (strain 972 / ATCC 24843) (Fission yeast).